The chain runs to 443 residues: GTPase Der (443 aa).

EngA-type G domains lie at 3 to 167 (PVIA…PEEK) and 176 to 349 (IKIA…QSIQ). Residues 9–16 (GRPNVGKS), 56–60 (DTGGL), 119–122 (NKAD), 182–189 (GRPNVGKS), 229–233 (DTAGI), and 294–297 (NKWD) contribute to the GTP site. Positions 350-434 (QELTTGQLTR…PVHIKLKTDP (85 aa)) constitute a KH-like domain.

It belongs to the TRAFAC class TrmE-Era-EngA-EngB-Septin-like GTPase superfamily. EngA (Der) GTPase family. Associates with the 50S ribosomal subunit.

In terms of biological role, GTPase that plays an essential role in the late steps of ribosome biogenesis. The protein is GTPase Der of Coxiella burnetii (strain CbuK_Q154) (Coxiella burnetii (strain Q154)).